The sequence spans 345 residues: Phosphoribosylformylglycinamidine cyclo-ligase (345 aa).

It belongs to the AIR synthase family.

The protein localises to the cytoplasm. The enzyme catalyses 2-formamido-N(1)-(5-O-phospho-beta-D-ribosyl)acetamidine + ATP = 5-amino-1-(5-phospho-beta-D-ribosyl)imidazole + ADP + phosphate + H(+). Its pathway is purine metabolism; IMP biosynthesis via de novo pathway; 5-amino-1-(5-phospho-D-ribosyl)imidazole from N(2)-formyl-N(1)-(5-phospho-D-ribosyl)glycinamide: step 2/2. The sequence is that of Phosphoribosylformylglycinamidine cyclo-ligase from Escherichia coli (strain SE11).